The primary structure comprises 453 residues: Probable 1,4-beta-D-glucan cellobiohydrolase A (453 aa).

The signal sequence occupies residues 1–17 (MYQRALLFSALATAVSA). Glu-226 serves as the catalytic Nucleophile. Glu-231 acts as the Proton donor in catalysis. Asn-284 is a glycosylation site (N-linked (GlcNAc...) asparagine).

The protein belongs to the glycosyl hydrolase 7 (cellulase C) family.

The protein resides in the secreted. The catalysed reaction is Hydrolysis of (1-&gt;4)-beta-D-glucosidic linkages in cellulose and cellotetraose, releasing cellobiose from the non-reducing ends of the chains.. Functionally, the biological conversion of cellulose to glucose generally requires three types of hydrolytic enzymes: (1) Endoglucanases which cut internal beta-1,4-glucosidic bonds; (2) Exocellobiohydrolases that cut the disaccharide cellobiose from the non-reducing end of the cellulose polymer chain; (3) Beta-1,4-glucosidases which hydrolyze the cellobiose and other short cello-oligosaccharides to glucose. This is Probable 1,4-beta-D-glucan cellobiohydrolase A (cbhA) from Aspergillus clavatus (strain ATCC 1007 / CBS 513.65 / DSM 816 / NCTC 3887 / NRRL 1 / QM 1276 / 107).